The primary structure comprises 138 residues: Probable glycine cleavage system H protein 1 (138 aa).

The region spanning 30-112 (IATVGITDYA…YGRGWIFKLK (83 aa)) is the Lipoyl-binding domain. Lysine 71 carries the post-translational modification N6-lipoyllysine.

It belongs to the GcvH family. In terms of assembly, the glycine cleavage system is composed of four proteins: P, T, L and H. (R)-lipoate is required as a cofactor.

Its function is as follows. The glycine cleavage system catalyzes the degradation of glycine. The H protein shuttles the methylamine group of glycine from the P protein to the T protein. The sequence is that of Probable glycine cleavage system H protein 1 from Sulfolobus acidocaldarius (strain ATCC 33909 / DSM 639 / JCM 8929 / NBRC 15157 / NCIMB 11770).